A 493-amino-acid chain; its full sequence is Cysteine--tRNA ligase (493 aa).

Cys29 provides a ligand contact to Zn(2+). The 'HIGH' region signature appears at 31 to 41 (PTVYDFAHIGN). 3 residues coordinate Zn(2+): Cys227, His252, and Glu256. The 'KMSKS' region motif lies at 285–289 (KMSKS). Lys288 contributes to the ATP binding site.

The protein belongs to the class-I aminoacyl-tRNA synthetase family. In terms of assembly, monomer. Requires Zn(2+) as cofactor.

The protein resides in the cytoplasm. It carries out the reaction tRNA(Cys) + L-cysteine + ATP = L-cysteinyl-tRNA(Cys) + AMP + diphosphate. The polypeptide is Cysteine--tRNA ligase (Rhodopseudomonas palustris (strain HaA2)).